The chain runs to 428 residues: Succinyl-CoA--L-malate CoA-transferase alpha subunit (428 aa).

The interval Met1–Gln31 is disordered. Polar residues predominate over residues Pro21–Gln31. The Nucleophile role is filled by Asp200.

This sequence belongs to the CoA-transferase III family. In terms of assembly, forms a large complex composed of six heterodimers (alpha, beta).

It carries out the reaction succinyl-CoA + (S)-malate = (S)-malyl-CoA + succinate. The catalysed reaction is (3S)-citramalate + succinyl-CoA = (3S)-citramalyl-CoA + succinate. Involved in the 3-hydroxypropionate cycle used for autotrophic carbon dioxide fixation. Catalyzes the transfer of CoA moiety from succinyl-CoA to L-malate to yield L-malyl-CoA. It is highly specific for succinyl-CoA as the CoA donor, however it can accept L-citramalate instead of L-malate as the CoA acceptor. The protein is Succinyl-CoA--L-malate CoA-transferase alpha subunit (smtA) of Chloroflexus aurantiacus.